We begin with the raw amino-acid sequence, 246 residues long: tRNA (guanine-N(1)-)-methyltransferase (246 aa).

Residues glycine 112 and 131–136 (IGDYVL) each bind S-adenosyl-L-methionine.

It belongs to the RNA methyltransferase TrmD family. Homodimer.

Its subcellular location is the cytoplasm. The enzyme catalyses guanosine(37) in tRNA + S-adenosyl-L-methionine = N(1)-methylguanosine(37) in tRNA + S-adenosyl-L-homocysteine + H(+). Functionally, specifically methylates guanosine-37 in various tRNAs. The protein is tRNA (guanine-N(1)-)-methyltransferase of Thermosipho africanus (strain TCF52B).